The chain runs to 65 residues: Small ribosomal subunit protein bS21 (65 aa).

Belongs to the bacterial ribosomal protein bS21 family.

The polypeptide is Small ribosomal subunit protein bS21 (Trichlorobacter lovleyi (strain ATCC BAA-1151 / DSM 17278 / SZ) (Geobacter lovleyi)).